Reading from the N-terminus, the 104-residue chain is uncharacterized protein (104 aa).

Transmembrane regions (helical) follow at residues 26 to 46 (IGTG…FTFF) and 70 to 90 (GLLG…IIAI).

The protein localises to the membrane. This is an uncharacterized protein from Acanthamoeba polyphaga mimivirus (APMV).